A 491-amino-acid chain; its full sequence is Probable malate:quinone oxidoreductase (491 aa).

It belongs to the MQO family. FAD is required as a cofactor.

The enzyme catalyses (S)-malate + a quinone = a quinol + oxaloacetate. Its pathway is carbohydrate metabolism; tricarboxylic acid cycle; oxaloacetate from (S)-malate (quinone route): step 1/1. This is Probable malate:quinone oxidoreductase from Actinobacillus pleuropneumoniae serotype 5b (strain L20).